Reading from the N-terminus, the 95-residue chain is RING finger protein Z (95 aa).

Gly2 carries the N-myristoyl glycine; by host lipid modification. The RING-type; atypical zinc-finger motif lies at 38–74 (CKRCWFATKGLIACSDHYLCLNCLTIMLSDGNFCEVC). A PTAP/PSAP motif motif is present at residues 88 to 91 (PSAP).

Belongs to the arenaviridae Z protein family. In terms of assembly, interacts with protein NP; this interaction probably directs the encapsidated genome to budding sites. Interacts (via RING domain) with polymerase L; this interaction inhibits viral transcription and replication, Z partially blocks the product exit tunnel for the releasing nascent RNA product. Interacts with the glycoprotein complex; this interaction plays a role in virion budding. Interacts with host eIF4E; this interaction results in eIF4E reduced affinity for its substrate, the 5'-m7 G cap structure. Interacts (via late-budding domain) with host TSG101; this interaction is essential for budding and release of viral particles. Interacts with host RPLP0; this interaction may serve to load ribosome-like particles inside the virion. Interacts with host PML; this interaction induces PML bodies redistribution in the cytoplasm upon viral infection. Myristoylation is required for the role of RING finger protein Z in assembly and budding.

The protein resides in the virion. It is found in the host cytoplasm. Its subcellular location is the host perinuclear region. The protein localises to the host cell membrane. Plays a crucial role in virion assembly and budding. Expressed late in the virus life cycle, it acts as an inhibitor of viral transcription and RNA synthesis by interacting with the viral polymerase L. Presumably recruits the NP encapsidated genome to cellular membranes at budding sites via direct interaction with NP. Plays critical roles in the final steps of viral release by interacting with host TSG101, a member of the vacuolar protein-sorting pathway and using other cellular host proteins involved in vesicle formation pathway. The budding of the virus progeny occurs after association of protein Z with the viral glycoprotein complex SSP-GP1-GP2 at the cell periphery, step that requires myristoylation of protein Z. Also selectively represses protein production by associating with host eIF4E. In cell-based minigenome assay, has an inhibitory effect on the ribonucleoprotein machinery (vRNP), which is responsible for the replication and transcription of the viral genome. The sequence is that of RING finger protein Z from Sooretamys angouya (Paraguayan rice rat).